We begin with the raw amino-acid sequence, 130 residues long: Small ribosomal subunit protein uS11c (130 aa).

This sequence belongs to the universal ribosomal protein uS11 family. In terms of assembly, part of the 30S ribosomal subunit.

The protein resides in the plastid. Its subcellular location is the chloroplast. The polypeptide is Small ribosomal subunit protein uS11c (Chlorella vulgaris (Green alga)).